The sequence spans 318 residues: uncharacterized protein (318 aa).

2 helical membrane-spanning segments follow: residues 230 to 250 (VWTYLGSIISLLSLAYASFLI) and 264 to 284 (ASLMVAILFLGGVQLISLGVI).

Belongs to the glycosyltransferase 2 family. GtrB subfamily.

It localises to the cell membrane. This is an uncharacterized protein from Synechocystis sp. (strain ATCC 27184 / PCC 6803 / Kazusa).